A 657-amino-acid chain; its full sequence is Pentatricopeptide repeat-containing protein At2g37310 (657 aa).

PPR repeat units lie at residues 21-55 (DGGA…SIKP), 56-86 (DNFL…ITVR), 87-121 (NAFS…SCYS), 128-165 (DSIS…GFDS), 166-196 (DVFV…MSER), 197-232 (DVVS…DFKP), 233-267 (NGVT…HIQM), 268-298 (DLSL…MSEK), 299-333 (DSVT…GLST), 334-364 (WNAM…GSRP), 365-399 (NTVT…GADN), 400-430 (NIYV…CKDR), 431-465 (SLIA…GTKP), 466-501 (DDVT…DIEP), and 502-536 (GVEH…PIAK). Residues 537–612 (VWGALLNGAS…IPGTSWIETE (76 aa)) form a type E motif region. The interval 613-643 (KGLRSFIAKDSSCERSKEMYEIIEGLVESMS) is type E(+) motif.

This sequence belongs to the PPR family. PCMP-E subfamily.

In Arabidopsis thaliana (Mouse-ear cress), this protein is Pentatricopeptide repeat-containing protein At2g37310 (PCMP-E49).